The primary structure comprises 431 residues: Chaperone SurA (431 aa).

An N-terminal signal peptide occupies residues 1–22 (MKLWKPTLISVLSALTLFNAHA). 2 consecutive PpiC domains span residues 173–271 (TVQY…KIDD) and 280–380 (VTEV…EVLD).

It is found in the periplasm. The catalysed reaction is [protein]-peptidylproline (omega=180) = [protein]-peptidylproline (omega=0). Chaperone involved in the correct folding and assembly of outer membrane proteins. Recognizes specific patterns of aromatic residues and the orientation of their side chains, which are found more frequently in integral outer membrane proteins. May act in both early periplasmic and late outer membrane-associated steps of protein maturation. This is Chaperone SurA from Vibrio cholerae serotype O1 (strain ATCC 39315 / El Tor Inaba N16961).